The following is a 500-amino-acid chain: Serine/threonine protein phosphatase 2A 57 kDa regulatory subunit B' kappa isoform (500 aa).

A disordered region spans residues Met1–Arg53. Polar residues predominate over residues Leu21–Gly37.

It belongs to the phosphatase 2A regulatory subunit B56 family. PP2A consists of a common heteromeric enzyme, composed of a catalytic subunit (subunits C), a constant regulatory subunit (subunit A), and a variety of regulatory subunits such as subunits B (the R2/B/PR55/B55, R3/B''/PR72/PR130/PR59 and R5/B'/B56 families).

The protein localises to the cytoplasm. In terms of biological role, the B regulatory subunit may modulate substrate selectivity and catalytic activity, and may also direct the localization of the catalytic enzyme to a particular subcellular compartment. This is Serine/threonine protein phosphatase 2A 57 kDa regulatory subunit B' kappa isoform (B'KAPPA) from Arabidopsis thaliana (Mouse-ear cress).